The following is a 432-amino-acid chain: N-acylneuraminate cytidylyltransferase (432 aa).

Residue Met1 is modified to N-acetylmethionine. The segment at 1 to 38 (MDALEKGAATSGPAPRGRPSRGRPPKLQRSRGAGRGLE) is disordered. The BC1 motif signature appears at 15–31 (PRGRPSRGRPPKLQRSR). A compositionally biased stretch (basic residues) spans 18–29 (RPSRGRPPKLQR). Omega-N-methylarginine occurs at positions 35 and 50. Substrate is bound by residues Arg50, Asn60, Arg109, Ser118, Ser120, and Gln141. The BC2 motif motif lies at 198 to 204 (KRPRRQD). Arg199 is an active-site residue. Positions 267 to 274 (KEKLKEIK) match the BC3 motif motif.

This sequence belongs to the CMP-NeuNAc synthase family. In terms of assembly, homotetramer; the active enzyme is formed by a dimer of dimers. In terms of tissue distribution, liver.

It localises to the nucleus. The enzyme catalyses an N-acylneuraminate + CTP = a CMP-N-acyl-beta-neuraminate + diphosphate. It functions in the pathway amino-sugar metabolism; N-acetylneuraminate metabolism. Functionally, catalyzes the activation of N-acetylneuraminic acid (NeuNAc) to cytidine 5'-monophosphate N-acetylneuraminic acid (CMP-NeuNAc), a substrate required for the addition of sialic acid. Has some activity toward NeuNAc, N-glycolylneuraminic acid (Neu5Gc) or 2-keto-3-deoxy-D-glycero-D-galacto-nononic acid (KDN). The protein is N-acylneuraminate cytidylyltransferase (Cmas) of Rattus norvegicus (Rat).